Consider the following 951-residue polypeptide: Glycine dehydrogenase (decarboxylating) 1 (951 aa).

Position 703 is an N6-(pyridoxal phosphate)lysine (Lys703).

This sequence belongs to the GcvP family. The glycine cleavage system is composed of four proteins: P, T, L and H. Requires pyridoxal 5'-phosphate as cofactor.

It carries out the reaction N(6)-[(R)-lipoyl]-L-lysyl-[glycine-cleavage complex H protein] + glycine + H(+) = N(6)-[(R)-S(8)-aminomethyldihydrolipoyl]-L-lysyl-[glycine-cleavage complex H protein] + CO2. Its function is as follows. The glycine cleavage system catalyzes the degradation of glycine. The P protein binds the alpha-amino group of glycine through its pyridoxal phosphate cofactor; CO(2) is released and the remaining methylamine moiety is then transferred to the lipoamide cofactor of the H protein. The sequence is that of Glycine dehydrogenase (decarboxylating) 1 from Pseudomonas fluorescens (strain ATCC BAA-477 / NRRL B-23932 / Pf-5).